Here is a 331-residue protein sequence, read N- to C-terminus: Protein REVEILLE 6 (331 aa).

The 55-residue stretch at 67 to 121 folds into the HTH myb-type domain; it reads TITKSRESWTEPEHDKFLEALQLFDRDWKKIEAFIGSKTVIQIRSHAQKYFLKVQ. The segment at residues 94 to 117 is a DNA-binding region (H-T-H motif); sequence WKKIEAFIGSKTVIQIRSHAQKYF. Disordered regions lie at residues 122-166, 203-237, and 309-331; these read KSGT…EPND, LPKA…GNVG, and SETA…EIST. Residues 150–165 show a composition bias toward polar residues; sequence VQLQVPGSFKSTSEPN. Residues 211–220 show a composition bias toward low complexity; the sequence is NNNCSSSSEN. 2 stretches are compositionally biased toward basic and acidic residues: residues 226-235 and 322-331; these read SNRDARDHGN and LNKDPPEIST.

Its subcellular location is the nucleus. Functionally, probable transcription factor. RVE4, RVE6 and RVE8 are components of the circadian system acting synergistically to regulate flowering time, redundantly to regulate leaf growth, and antagonistically to regulate hypocotyl elongation; their action seems independent of ZTL and HY5. This chain is Protein REVEILLE 6, found in Arabidopsis thaliana (Mouse-ear cress).